Reading from the N-terminus, the 370-residue chain is Probable trehalose-phosphate phosphatase J (370 aa).

The protein belongs to the trehalose phosphatase family. A divalent metal cation serves as cofactor.

It carries out the reaction alpha,alpha-trehalose 6-phosphate + H2O = alpha,alpha-trehalose + phosphate. The protein operates within glycan biosynthesis; trehalose biosynthesis. Functionally, removes the phosphate from trehalose 6-phosphate to produce free trehalose. Trehalose accumulation in plant may improve abiotic stress tolerance. This Arabidopsis thaliana (Mouse-ear cress) protein is Probable trehalose-phosphate phosphatase J (TPPJ).